The following is a 359-amino-acid chain: DNA polymerase IV (359 aa).

Positions 6-186 constitute a UmuC domain; sequence IIHVDMDAFY…LPIEAFWGVG (181 aa). Residues D10 and D104 each coordinate Mg(2+). E105 is a catalytic residue.

Belongs to the DNA polymerase type-Y family. Monomer. The cofactor is Mg(2+).

The protein localises to the cytoplasm. It carries out the reaction DNA(n) + a 2'-deoxyribonucleoside 5'-triphosphate = DNA(n+1) + diphosphate. Functionally, poorly processive, error-prone DNA polymerase involved in untargeted mutagenesis. Copies undamaged DNA at stalled replication forks, which arise in vivo from mismatched or misaligned primer ends. These misaligned primers can be extended by PolIV. Exhibits no 3'-5' exonuclease (proofreading) activity. May be involved in translesional synthesis, in conjunction with the beta clamp from PolIII. The chain is DNA polymerase IV from Akkermansia muciniphila (strain ATCC BAA-835 / DSM 22959 / JCM 33894 / BCRC 81048 / CCUG 64013 / CIP 107961 / Muc).